The following is a 327-amino-acid chain: MGPETLHIGGRKSKLAVIQSNHVLKLIEEKYPDYDCKVFTLQTLGDQIQFKPLYSFGGKALWTKELEDHLYHDDPSKKLDLIVHSLKDMPTLLPEGFELGGITKRVDPTDCLVMPFYSAYKSLDDLPDGGIVGTSSVRRSAQLKRKYPHLKFESVRGNIQTRLQKLDDPKSPYQCIILASAGLMRMGLENRITQRFHSDTMYHAVGQGALGIEIRKGDTKMMKILDEICDLNATICCLSERALMRTLEGGCSVPIGVESKYNEETKKLLLKAIVVDVEGTEAVEDEIEMLIENVKEDSMACGKILAERMIADGAKKILDEINLDRIK.

Residue Cys-251 is modified to S-(dipyrrolylmethanemethyl)cysteine.

It belongs to the HMBS family. Dipyrromethane is required as a cofactor.

It catalyses the reaction 4 porphobilinogen + H2O = hydroxymethylbilane + 4 NH4(+). The protein operates within porphyrin-containing compound metabolism; protoporphyrin-IX biosynthesis; coproporphyrinogen-III from 5-aminolevulinate: step 2/4. Its function is as follows. Catalyzes the tetrapolymerization of the monopyrrole porphobilinogen (PBG) into the hydroxymethylbilane pre-uroporphyrinogen in several discrete steps. The chain is Porphobilinogen deaminase (HEM3) from Saccharomyces cerevisiae (strain ATCC 204508 / S288c) (Baker's yeast).